A 576-amino-acid polypeptide reads, in one-letter code: M-phase inducer phosphatase 2 (576 aa).

Ser-42 is modified (phosphoserine). The segment covering 90 to 105 (RRTSECSLSSESSESS) has biased composition (low complexity). The disordered stretch occupies residues 90-119 (RRTSECSLSSESSESSDAGLCMDSPSPVDP). Ser-167 is modified (phosphoserine; by MELK). Ser-248 carries the post-translational modification Phosphoserine. Ser-321 is subject to Phosphoserine; by MELK and MAPK14. The disordered stretch occupies residues 338-358 (QDRDVPVQSKRRKSVTPLEEQ). Ser-351 carries the phosphoserine; by AURKA modification. Phosphoserine; by BRSK1 and MAPK14 is present on Ser-372. Residues 427-534 (IVEKFVIVDC…FFPQHPNFCE (108 aa)) form the Rhodanese domain. Residue Cys-483 is part of the active site. Residue Ser-559 is modified to Phosphoserine.

Belongs to the MPI phosphatase family. In terms of assembly, interacts with MAPK14 and 14-3-3 proteins. Post-translationally, phosphorylated by BRSK1 in vitro. Phosphorylated by CHEK1, which inhibits the activity of this protein. Phosphorylation at Ser-351 by AURKA might locally participate in the control of the onset of mitosis. Phosphorylation by MELK at Ser-167 promotes localization to the centrosome and the spindle poles during mitosis. Phosphorylation at Ser-321 and Ser-372 by MAPK14 is required for binding to 14-3-3 proteins. Expressed predominantly in spleen, lung, heart, brain, intestine, and muscle.

It localises to the cytoplasm. The protein localises to the cytoskeleton. The protein resides in the microtubule organizing center. It is found in the centrosome. Its subcellular location is the spindle pole. It catalyses the reaction O-phospho-L-tyrosyl-[protein] + H2O = L-tyrosyl-[protein] + phosphate. With respect to regulation, stimulated by B-type cyclins. In terms of biological role, tyrosine protein phosphatase which functions as a dosage-dependent inducer of mitotic progression. Directly dephosphorylates CDK1 and stimulates its kinase activity. Required for G2/M phases of the cell cycle progression and abscission during cytokinesis in a ECT2-dependent manner. The three isoforms seem to have a different level of activity. The chain is M-phase inducer phosphatase 2 (Cdc25b) from Mus musculus (Mouse).